A 172-amino-acid polypeptide reads, in one-letter code: Crossover junction endodeoxyribonuclease RuvC (172 aa).

Catalysis depends on residues D11, E70, and D142. Residues D11, E70, and D142 each contribute to the Mg(2+) site.

This sequence belongs to the RuvC family. Homodimer which binds Holliday junction (HJ) DNA. The HJ becomes 2-fold symmetrical on binding to RuvC with unstacked arms; it has a different conformation from HJ DNA in complex with RuvA. In the full resolvosome a probable DNA-RuvA(4)-RuvB(12)-RuvC(2) complex forms which resolves the HJ. The cofactor is Mg(2+).

Its subcellular location is the cytoplasm. The catalysed reaction is Endonucleolytic cleavage at a junction such as a reciprocal single-stranded crossover between two homologous DNA duplexes (Holliday junction).. Functionally, the RuvA-RuvB-RuvC complex processes Holliday junction (HJ) DNA during genetic recombination and DNA repair. Endonuclease that resolves HJ intermediates. Cleaves cruciform DNA by making single-stranded nicks across the HJ at symmetrical positions within the homologous arms, yielding a 5'-phosphate and a 3'-hydroxyl group; requires a central core of homology in the junction. The consensus cleavage sequence is 5'-(A/T)TT(C/G)-3'. Cleavage occurs on the 3'-side of the TT dinucleotide at the point of strand exchange. HJ branch migration catalyzed by RuvA-RuvB allows RuvC to scan DNA until it finds its consensus sequence, where it cleaves and resolves the cruciform DNA. The chain is Crossover junction endodeoxyribonuclease RuvC from Hydrogenovibrio crunogenus (strain DSM 25203 / XCL-2) (Thiomicrospira crunogena).